The sequence spans 1043 residues: DVSSEVEVLKALKSLFEHHKALDEKVRERLRAALERVTTLEEQLAGAHQQVSALQQGAGIRDGVAEEEETVDLGPKRLWKDDTGRVEELQGLLEKQNYELSQARERLVTLSATVTELEEDLGTARRDLIKSEELSGKHQRDLREALAQKEDMEERITTLEKRYLAAQREATSIHDLNDKLENELANKESLHRQCEEKARHLQELLEVAEQKLQQTMRKAETLPEVEAELSQRIAALTKAEERHGNIEEHLRQLEGQLEEKNQELARVRQREKMNEDHNKRLSDTVDRLLSESNERLQLHLKERMAALEEKGRLSEEIEKLRQEVDQLKGRGGPFVDGIHSRSHVGSTTDVRFSLSTAAHVPPGLHRRYTALREESAKDWKPAPLPGVLAATTTPALTVTLRSPMWTRMSLGAWWALRLMSSHLVAILDAQTLAMMLQEQLDAINQEIRMIQEEKESTELRAEEIETRVTSGSMEALNLTQLRKRGSIPTSLTALSLASASPPLSGRSTPKLTSRSAAQDLDRMGVMTLPSDLRKHRRKLLSPVSREENREDKATIKCETSPPSSPRTLRLEKLGHPTLSQEEGKSALEGQDSNPSSSNSSQDSLHKGAKRKGIKSSIGRLFGKKEKGRLIHLSRDATGHVLLTDSELSLQEPMVPAKLGTQAEKDRRLKKKHQLLEDARRKGMPFAQWDGPTVVSWLELWVGMPAWYVAACRANVKSGAIMSALSDTEIQREIGISNALHRLKLRLAIQEMVSLTSPSAPPTSRTSSGNVWVTHEEMETLATSTKTDSEEGSWAQTLAYGDMNHEWIGNEWLPSLGLPQYRSYFMECLVDARMLDHLTKKDLRVHLKMVDSFHRTSLQYGIMCLKRLNYDRKELEKRREESQHEIKDVLVWTNDQVVHWVQSIGLRDYAGNLHESGVHGALLALDENFDHNTLALVLQIPTQNTQARQVMEREFNNLLALGTDRKLDDGEEKVFRRAPSWRKRFRPRDHHSGGMLGTSAETLPAGFRVSTLGPLQPPPAPPNKIMPEAHSHYLYGHMLSAFRD.

Coiled coils occupy residues 24–332 (EKVR…GRGG) and 426–470 (ILDA…RVTS). The segment at 498–617 (SASPPLSGRS…AKRKGIKSSI (120 aa)) is disordered. S500 is modified (phosphoserine). The segment covering 505-516 (GRSTPKLTSRSA) has biased composition (polar residues). S541 is modified (phosphoserine). A compositionally biased stretch (basic and acidic residues) spans 544–555 (SREENREDKATI). The segment covering 590–602 (QDSNPSSSNSSQD) has biased composition (low complexity). 3 consecutive SAM domains span residues 688–754 (WDGP…MVSL), 803–867 (NHEW…LKRL), and 891–960 (WTND…LLAL). Residues 864 to 890 (LKRLNYDRKELEKRREESQHEIKDVLV) are a coiled coil.

Belongs to the liprin family. Liprin-alpha subfamily. Forms homodimers and heterodimers with liprins-alpha and liprins-beta. Interacts with the second PTPase domain of PTPRD, PTPRF and PTPRS. Interacts with RIMS1 and RIMS2. Interacts with GIT1 and GIT2. Interacts with GRIP1. Interacts with KIF1A.

It is found in the cytoplasm. The protein localises to the cell surface. In terms of biological role, may regulate the disassembly of focal adhesions. May localize receptor-like tyrosine phosphatases type 2A at specific sites on the plasma membrane, possibly regulating their interaction with the extracellular environment and their association with substrates. This is Liprin-alpha-4 (Ppfia4) from Rattus norvegicus (Rat).